Reading from the N-terminus, the 296-residue chain is Acetylglutamate kinase (296 aa).

Substrate contacts are provided by residues 67–68 (GG), Arg-89, and Asn-194.

Belongs to the acetylglutamate kinase family. ArgB subfamily.

The protein localises to the cytoplasm. It catalyses the reaction N-acetyl-L-glutamate + ATP = N-acetyl-L-glutamyl 5-phosphate + ADP. The protein operates within amino-acid biosynthesis; L-arginine biosynthesis; N(2)-acetyl-L-ornithine from L-glutamate: step 2/4. Its function is as follows. Catalyzes the ATP-dependent phosphorylation of N-acetyl-L-glutamate. In Brucella canis (strain ATCC 23365 / NCTC 10854 / RM-666), this protein is Acetylglutamate kinase.